Consider the following 82-residue polypeptide: Small ribosomal subunit protein bS16 (82 aa).

It belongs to the bacterial ribosomal protein bS16 family.

This chain is Small ribosomal subunit protein bS16, found in Shewanella sp. (strain MR-4).